Here is a 314-residue protein sequence, read N- to C-terminus: tRNA dimethylallyltransferase (314 aa).

Position 11–18 (11–18) interacts with ATP; that stretch reads GPTASGKT. 13-18 serves as a coordination point for substrate; that stretch reads TASGKT. 4 interaction with substrate tRNA regions span residues 36-39, 160-164, 241-246, and 274-281; these read DSAL, QRINR, RCVGYR, and KRQITWLR.

Belongs to the IPP transferase family. Monomer. Mg(2+) is required as a cofactor.

It catalyses the reaction adenosine(37) in tRNA + dimethylallyl diphosphate = N(6)-dimethylallyladenosine(37) in tRNA + diphosphate. Its function is as follows. Catalyzes the transfer of a dimethylallyl group onto the adenine at position 37 in tRNAs that read codons beginning with uridine, leading to the formation of N6-(dimethylallyl)adenosine (i(6)A). The sequence is that of tRNA dimethylallyltransferase from Glaesserella parasuis serovar 5 (strain SH0165) (Haemophilus parasuis).